The primary structure comprises 144 residues: HISANIMQLHHSKHHATYVNNLNVAEQKLAEAVAKGDVTAEIALQPAIKFNGGGHINHSIFWTNLSPNGGGAPTGDLQKAIETDFGSFTKLQEKMSAVSVAVQGSGWGWLGYDKETGRLRIAACANQDPLQATTGLIPLLGIDV.

Mn(2+) contacts are provided by histidine 10, histidine 58, and aspartate 143.

Belongs to the iron/manganese superoxide dismutase family. Homotetramer. Mn(2+) is required as a cofactor.

It is found in the mitochondrion matrix. It catalyses the reaction 2 superoxide + 2 H(+) = H2O2 + O2. Destroys superoxide anion radicals which are normally produced within the cells and which are toxic to biological systems. In Petromyzon marinus (Sea lamprey), this protein is Superoxide dismutase [Mn], mitochondrial.